Here is a 499-residue protein sequence, read N- to C-terminus: Glycerol kinase (499 aa).

Position 17 (Thr-17) interacts with ADP. ATP-binding residues include Thr-17, Thr-18, and Ser-19. Residue Thr-17 coordinates sn-glycerol 3-phosphate. Arg-21 serves as a coordination point for ADP. 4 residues coordinate sn-glycerol 3-phosphate: Arg-87, Glu-88, Tyr-139, and Asp-243. Residues Arg-87, Glu-88, Tyr-139, Asp-243, and Gln-244 each contribute to the glycerol site. Residues Thr-265 and Gly-308 each contribute to the ADP site. Positions 265, 308, 312, and 409 each coordinate ATP. ADP contacts are provided by Gly-409 and Asn-413.

It belongs to the FGGY kinase family.

It catalyses the reaction glycerol + ATP = sn-glycerol 3-phosphate + ADP + H(+). It participates in polyol metabolism; glycerol degradation via glycerol kinase pathway; sn-glycerol 3-phosphate from glycerol: step 1/1. Inhibited by fructose 1,6-bisphosphate (FBP). Its function is as follows. Key enzyme in the regulation of glycerol uptake and metabolism. Catalyzes the phosphorylation of glycerol to yield sn-glycerol 3-phosphate. This Pseudomonas putida (strain ATCC 700007 / DSM 6899 / JCM 31910 / BCRC 17059 / LMG 24140 / F1) protein is Glycerol kinase.